The sequence spans 123 residues: Maintenance of telomere capping protein 3, mitochondrial (123 aa).

The N-terminal 37 residues, 1–37 (MMGRNGIRLALKRSFSTYQPPVVEITNITKLWPTLRP), are a transit peptide targeting the mitochondrion.

The protein resides in the mitochondrion. Functionally, may be involved in telomere capping. The protein is Maintenance of telomere capping protein 3, mitochondrial (MTC3) of Saccharomyces cerevisiae (strain ATCC 204508 / S288c) (Baker's yeast).